A 155-amino-acid chain; its full sequence is Transcriptional repressor NrdR (155 aa).

A zinc finger spans residues 3 to 34 (CPFCSHFESKVVDSRPTDEGQAIRRRRECVSC). The ATP-cone domain maps to 49-139 (LIVVKKSGNR…VYREFKDINT (91 aa)).

This sequence belongs to the NrdR family. Zn(2+) serves as cofactor.

Its function is as follows. Negatively regulates transcription of bacterial ribonucleotide reductase nrd genes and operons by binding to NrdR-boxes. The polypeptide is Transcriptional repressor NrdR (Alkaliphilus metalliredigens (strain QYMF)).